A 747-amino-acid polypeptide reads, in one-letter code: AT-rich interactive domain-containing protein 4 (747 aa).

Residues 454–475 (PLPTRKRSEPCRESKEIENGGP) form a disordered region. A compositionally biased stretch (basic and acidic residues) spans 459–471 (KRSEPCRESKEIE). The ARID domain occupies 566–670 (VCSEEEFLRD…YLLEYEYAHD (105 aa)). The PHD-type zinc finger occupies 674 to 730 (GECCLICRSSTAGDWVNCGSCGEWAHFGCDRRPGLGAFKDYAKTDGLEYVCPNCSVS).

It is found in the nucleus. The polypeptide is AT-rich interactive domain-containing protein 4 (ARID4) (Arabidopsis thaliana (Mouse-ear cress)).